Consider the following 330-residue polypeptide: MAVLGAPGVLCDNGATAERPTLDHHWDLWKKTRMRRNTDQNEEDVRRLIWEKNLKFIMLHNLEHSMGMHSYSVGMNHMGDMTPEEVIGYMGSLRIPRPWNRSGTLKSSSNQTLPDSVDWREKGCVTNVKYQGSCGSCWAFSAEGALEGQLKLKTGKLVSLSAQNLVDCSTEEKYGNKGCGGGFMTEAFQYIIDTSIDSEASYPYKAMDEKCLYDPKNRAATCSRYIELPFGDEEALKEAVATKGPVSVGIDDASHSSFFLYQSGVYDDPSCTENMNHGVLVVGYGTLDGKDYWLVKNSWGLHFGDQGYIRMARNNKNHCGIASYCSYPEI.

A signal peptide spans 1-17; sequence MAVLGAPGVLCDNGATA. The propeptide at 18 to 112 is activation peptide; the sequence is ERPTLDHHWD…GTLKSSSNQT (95 aa). N100 and N110 each carry an N-linked (GlcNAc...) asparagine glycan. 4 cysteine pairs are disulfide-bonded: C124-C222, C134-C179, C168-C211, and C271-C319. Residue C137 is part of the active site. Residues H277 and N297 contribute to the active site.

Belongs to the peptidase C1 family. As to quaternary structure, monomer. Highest levels occur in the ileum followed by spleen, brain, thyroid, ovary and uterus. Low levels are found in the liver, kidney, jejunum and lung with lowest levels in the heart.

It localises to the lysosome. The protein resides in the secreted. It is found in the cytoplasmic vesicle. Its subcellular location is the phagosome. The catalysed reaction is Similar to cathepsin L, but with much less activity on Z-Phe-Arg-|-NHMec, and more activity on the Z-Val-Val-Arg-|-Xaa compound.. Its function is as follows. Thiol protease. Key protease responsible for the removal of the invariant chain from MHC class II molecules and MHC class II antigen presentation. The bond-specificity of this proteinase is in part similar to the specificities of cathepsin L. This Rattus norvegicus (Rat) protein is Cathepsin S (Ctss).